The chain runs to 145 residues: HTH-type transcriptional regulator MhqR (145 aa).

The HTH marR-type domain occupies Ser5–Leu137. The H-T-H motif DNA-binding region spans Leu51–Gln74.

Its function is as follows. Negatively regulates mhqA, mhqED, mhqNOP, and azoR2 which may contribute to the degradation of aromatic compounds. This is HTH-type transcriptional regulator MhqR (mhqR) from Bacillus subtilis (strain 168).